We begin with the raw amino-acid sequence, 431 residues long: Divergent protein kinase domain 1B (431 aa).

Topologically, residues 1–30 (MRRLRRLVHLVLLCPFSKGLQGRLPGLRVK) are cytoplasmic. Positions 5–6 (RR) match the May mediate ER retention motif. A helical transmembrane segment spans residues 31 to 51 (YVLLVWLGIFVGSWMVYVHYS). The Lumenal segment spans residues 52–431 (SYSELCRGHV…WREISNTNYS (380 aa)). Intrachain disulfides connect cysteine 57–cysteine 94 and cysteine 62–cysteine 117.

It belongs to the DIPK family. In terms of processing, among the many cysteines in the lumenal domain, most are probably involved in disulfide bonds. In terms of tissue distribution, expressed in kidney, testis, lung, heart, stomach, intestine, pancreas, liver and salivary gland. Strongly expressed in acute pancreatitis, brain, and in peripheral endothelial cells.

Its subcellular location is the endoplasmic reticulum membrane. The sequence is that of Divergent protein kinase domain 1B (Dipk1b) from Mus musculus (Mouse).